We begin with the raw amino-acid sequence, 571 residues long: Serine/threonine-protein kinase Nek7 (571 aa).

One can recognise a Protein kinase domain in the interval 19-277 (YHVVEQVRRG…LRNPSLQPYL (259 aa)). Residues 25 to 33 (VRRGKSSSD) and Lys-48 each bind ATP. The Proton acceptor role is filled by Asp-144. Disordered stretches follow at residues 298–321 (SPKD…SREK) and 338–363 (TETG…ETKR). Residues 312–321 (FGKERVSREK) are compositionally biased toward basic and acidic residues. Low complexity predominate over residues 342 to 351 (SSSSSQPASS).

It belongs to the protein kinase superfamily. NEK Ser/Thr protein kinase family. NIMA subfamily.

It catalyses the reaction L-seryl-[protein] + ATP = O-phospho-L-seryl-[protein] + ADP + H(+). The enzyme catalyses L-threonyl-[protein] + ATP = O-phospho-L-threonyl-[protein] + ADP + H(+). In terms of biological role, may be involved in plant development processes. In Arabidopsis thaliana (Mouse-ear cress), this protein is Serine/threonine-protein kinase Nek7 (NEK7).